Reading from the N-terminus, the 182-residue chain is Probable RNA 2'-phosphotransferase (182 aa).

The protein belongs to the KptA/TPT1 family.

In terms of biological role, removes the 2'-phosphate from RNA via an intermediate in which the phosphate is ADP-ribosylated by NAD followed by a presumed transesterification to release the RNA and generate ADP-ribose 1''-2''-cyclic phosphate (APPR&gt;P). May function as an ADP-ribosylase. The chain is Probable RNA 2'-phosphotransferase from Trichormus variabilis (strain ATCC 29413 / PCC 7937) (Anabaena variabilis).